The chain runs to 209 residues: Chaperone protein TorD (209 aa).

It belongs to the TorD/DmsD family. TorD subfamily.

It is found in the cytoplasm. Involved in the biogenesis of TorA. Acts on TorA before the insertion of the molybdenum cofactor and, as a result, probably favors a conformation of the apoenzyme that is competent for acquiring the cofactor. The protein is Chaperone protein TorD of Shewanella massilia.